Consider the following 299-residue polypeptide: Oxygen-dependent coproporphyrinogen-III oxidase (299 aa).

A substrate-binding site is contributed by Ser-92. A divalent metal cation-binding residues include His-96 and His-106. His-106 acts as the Proton donor in catalysis. 108–110 (NVR) is a binding site for substrate. Residues His-145 and His-175 each coordinate a divalent metal cation. Positions 239 to 274 (YVEFNLVYDRGTLFGLQSGGRAESILMSLPPQVRWE) are important for dimerization. 257 to 259 (GGR) contacts substrate.

This sequence belongs to the aerobic coproporphyrinogen-III oxidase family. As to quaternary structure, homodimer. Requires a divalent metal cation as cofactor.

The protein resides in the cytoplasm. It catalyses the reaction coproporphyrinogen III + O2 + 2 H(+) = protoporphyrinogen IX + 2 CO2 + 2 H2O. Its pathway is porphyrin-containing compound metabolism; protoporphyrin-IX biosynthesis; protoporphyrinogen-IX from coproporphyrinogen-III (O2 route): step 1/1. Its function is as follows. Involved in the heme biosynthesis. Catalyzes the aerobic oxidative decarboxylation of propionate groups of rings A and B of coproporphyrinogen-III to yield the vinyl groups in protoporphyrinogen-IX. The sequence is that of Oxygen-dependent coproporphyrinogen-III oxidase from Xanthomonas campestris pv. campestris (strain B100).